A 579-amino-acid polypeptide reads, in one-letter code: Pre-mRNA-processing factor 17 (579 aa).

Positions 1-19 (MSAAIAALAASYGSGSGSE) are enriched in low complexity. Disordered regions lie at residues 1-34 (MSAA…LPAA) and 204-237 (DVAK…PGEE). WD repeat units follow at residues 286-326 (GHTK…RCLR), 330-369 (GHSK…CISR), 371-413 (TNRK…IVQE), 416-455 (RHLG…DFKY), 459-498 (PSMH…RLNK), 504-545 (GHMV…LYSR), and 548-578 (AHDK…IKLW).

As to quaternary structure, component of the catalytic spliceosome C complexes. Component of the postcatalytic spliceosome P complex. Interacts with PPIL1; this interaction leads to CDC40 isomerization. Post-translationally, undergoes isomerization of the peptide bond between Gly-94 and Pro-95. The reaction is catalyzed by PPIL1.

It localises to the nucleus. It is found in the nucleus speckle. Required for pre-mRNA splicing as component of the activated spliceosome. Plays an important role in embryonic brain development; this function does not require proline peptide bond isomerization. The protein is Pre-mRNA-processing factor 17 (Cdc40) of Mus musculus (Mouse).